The primary structure comprises 253 residues: Sulfate transporter CysZ (253 aa).

4 helical membrane passes run 31–51 (FVIL…WWLF), 75–95 (LLWP…FSTI), 151–171 (IVLL…PVLW), and 222–242 (IPLL…AMWV).

Belongs to the CysZ family.

The protein localises to the cell inner membrane. In terms of biological role, high affinity, high specificity proton-dependent sulfate transporter, which mediates sulfate uptake. Provides the sulfur source for the cysteine synthesis pathway. The polypeptide is Sulfate transporter CysZ (Escherichia coli O127:H6 (strain E2348/69 / EPEC)).